A 225-amino-acid chain; its full sequence is mRNA-decapping protein D10 (225 aa).

The Nudix hydrolase domain maps to 35-218; sequence AKYPLSVIGI…NVIKYIINAV (184 aa). The short motif at 116–137 is the Nudix box element; that stretch reads GKIKDLESITNCLVREIKEELN. Glu-122 contributes to the Mg(2+) binding site. Residue Glu-131 is the Nucleophile of the active site. A Mn(2+)-binding site is contributed by Glu-135. Asp-157 serves as a coordination point for Mg(2+).

Belongs to the Nudix hydrolase family. Mg(2+) is required as a cofactor. Mn(2+) serves as cofactor.

Its function is as follows. Decapping enzyme required for the removal of the 5'-end m7GpppN cap tethered to viral and host mRNAs to allow their decay in cells. May therefore accelerate viral and cellular mRNA turnover to eliminate competing host mRNAs and allow stage-specific synthesis of viral proteins. Acceleration of the turnover of cellular transcripts may even promote the shutoff of host protein synthesis. The protein is mRNA-decapping protein D10 of Fowlpox virus (strain NVSL) (FPV).